Here is a 170-residue protein sequence, read N- to C-terminus: Translationally-controlled tumor protein homolog (170 aa).

The TCTP domain occupies 1-170; the sequence is MLIYNDILNG…WKHGLKETKV (170 aa).

It belongs to the TCTP family.

Its subcellular location is the cytoplasm. It is found in the cytoskeleton. Its function is as follows. Involved in protein synthesis. Involved in microtubule stabilization. The polypeptide is Translationally-controlled tumor protein homolog (Gibberella zeae (strain ATCC MYA-4620 / CBS 123657 / FGSC 9075 / NRRL 31084 / PH-1) (Wheat head blight fungus)).